Consider the following 372-residue polypeptide: NAD(P)H-quinone oxidoreductase subunit 1 (372 aa).

The next 8 membrane-spanning stretches (helical) occupy residues 27-47 (LIWLPLPMLLVLVAAVVGVLV), 97-117 (LLFTLGPVLVVVPVILSWLIV), 128-148 (VGVGIFLWISLSSVQPIGLLM), 166-186 (AAQSISYEIPLALAVLAVVMM), 204-224 (ILSWNIWRQPVGFLIFWICAL), 266-286 (VLSALLVSVLYLGGWGFPVPV), 308-328 (ATGIVMTVLKAYLLVFIAILL), and 347-367 (FLLPLALVNLLVTAALKLAFP).

Belongs to the complex I subunit 1 family. As to quaternary structure, NDH-1 is composed of at least 11 different subunits.

It is found in the cellular thylakoid membrane. The enzyme catalyses a plastoquinone + NADH + (n+1) H(+)(in) = a plastoquinol + NAD(+) + n H(+)(out). The catalysed reaction is a plastoquinone + NADPH + (n+1) H(+)(in) = a plastoquinol + NADP(+) + n H(+)(out). NDH-1 shuttles electrons from an unknown electron donor, via FMN and iron-sulfur (Fe-S) centers, to quinones in the respiratory and/or the photosynthetic chain. The immediate electron acceptor for the enzyme in this species is believed to be plastoquinone. Couples the redox reaction to proton translocation, and thus conserves the redox energy in a proton gradient. The chain is NAD(P)H-quinone oxidoreductase subunit 1 from Synechococcus sp. (strain WH7803).